Here is a 203-residue protein sequence, read N- to C-terminus: Fucoxanthin-chlorophyll a-c binding protein, chloroplastic (203 aa).

Residues 1-30 constitute a chloroplast transit peptide; sequence MKLAIAALLAGSAAAFAPAQSGKASTALNM.

This sequence belongs to the fucoxanthin chlorophyll protein family. As to quaternary structure, the LHC complex of chromophytic algae is composed of fucoxanthin, chlorophyll A and C bound non-covalently by fucoxanthin chlorophyll proteins (FCPs). The ratio of pigments in this LHC is; fucoxanthin: chlorophyll C: chlorophyll A; (0.6-1): (0.1-0.3): (1).

It localises to the plastid. The protein localises to the chloroplast thylakoid membrane. Its function is as follows. The light-harvesting complex (LHC) functions as a light receptor, it captures and delivers excitation energy to photosystems with which it is closely associated. Energy is transferred from the carotenoid and chlorophyll C (or B) to chlorophyll A and the photosynthetic reaction centers where it is used to synthesize ATP and reducing power. The sequence is that of Fucoxanthin-chlorophyll a-c binding protein, chloroplastic (FCPA) from Trieres chinensis (Marine centric diatom).